Here is a 126-residue protein sequence, read N- to C-terminus: Protein ApaG (126 aa).

The ApaG domain maps to 2–126 (DVSLPCIKIQ…FRLAVPHVLN (125 aa)).

This is Protein ApaG from Vibrio cholerae serotype O1 (strain ATCC 39541 / Classical Ogawa 395 / O395).